The following is a 129-amino-acid chain: NADH dehydrogenase [ubiquinone] 1 beta subcomplex subunit 4 (129 aa).

Residue S2 is modified to N-acetylserine. Phosphoserine is present on S26. Residues 88 to 105 traverse the membrane as a helical segment; sequence LMGALCGFGPLIFIYYII.

It belongs to the complex I NDUFB4 subunit family. Complex I is composed of 45 different subunits.

Its subcellular location is the mitochondrion inner membrane. Its function is as follows. Accessory subunit of the mitochondrial membrane respiratory chain NADH dehydrogenase (Complex I), that is believed not to be involved in catalysis. Complex I functions in the transfer of electrons from NADH to the respiratory chain. The immediate electron acceptor for the enzyme is believed to be ubiquinone. This chain is NADH dehydrogenase [ubiquinone] 1 beta subcomplex subunit 4 (NDUFB4), found in Gorilla gorilla gorilla (Western lowland gorilla).